Reading from the N-terminus, the 361-residue chain is Phospho-N-acetylmuramoyl-pentapeptide-transferase (361 aa).

The next 11 membrane-spanning stretches (helical) occupy residues 10–30, 40–60, 84–104, 107–127, 147–167, 175–195, 206–226, 232–252, 260–280, 288–308, and 341–361; these read PGTG…ACLI, LSLP…IGVP, GTPT…GSLV, GDPR…IGGI, LLLQ…HGAI, WGWL…VFLA, LDGL…LQLM, GDPA…GFLL, VFMG…IALL, LLMG…VWVF, and VVVS…VLVP.

It belongs to the glycosyltransferase 4 family. MraY subfamily. Requires Mg(2+) as cofactor.

The protein resides in the cell inner membrane. It carries out the reaction UDP-N-acetyl-alpha-D-muramoyl-L-alanyl-gamma-D-glutamyl-meso-2,6-diaminopimeloyl-D-alanyl-D-alanine + di-trans,octa-cis-undecaprenyl phosphate = di-trans,octa-cis-undecaprenyl diphospho-N-acetyl-alpha-D-muramoyl-L-alanyl-D-glutamyl-meso-2,6-diaminopimeloyl-D-alanyl-D-alanine + UMP. Its pathway is cell wall biogenesis; peptidoglycan biosynthesis. Its function is as follows. Catalyzes the initial step of the lipid cycle reactions in the biosynthesis of the cell wall peptidoglycan: transfers peptidoglycan precursor phospho-MurNAc-pentapeptide from UDP-MurNAc-pentapeptide onto the lipid carrier undecaprenyl phosphate, yielding undecaprenyl-pyrophosphoryl-MurNAc-pentapeptide, known as lipid I. In Synechococcus sp. (strain RCC307), this protein is Phospho-N-acetylmuramoyl-pentapeptide-transferase.